We begin with the raw amino-acid sequence, 82 residues long: Acyl carrier protein (82 aa).

One can recognise a Carrier domain in the interval 4–79 (EKIFQELKNI…DVVDIIESNL (76 aa)). The residue at position 39 (Ser39) is an O-(pantetheine 4'-phosphoryl)serine.

Belongs to the acyl carrier protein (ACP) family. In terms of processing, 4'-phosphopantetheine is transferred from CoA to a specific serine of apo-ACP by AcpS. This modification is essential for activity because fatty acids are bound in thioester linkage to the sulfhydryl of the prosthetic group.

The protein localises to the cytoplasm. It participates in lipid metabolism; fatty acid biosynthesis. Functionally, carrier of the growing fatty acid chain in fatty acid biosynthesis. The protein is Acyl carrier protein of Coprothermobacter proteolyticus (strain ATCC 35245 / DSM 5265 / OCM 4 / BT).